Consider the following 168-residue polypeptide: Nicotinamide-nucleotide adenylyltransferase (168 aa).

The protein belongs to the archaeal NMN adenylyltransferase family.

Its subcellular location is the cytoplasm. The catalysed reaction is beta-nicotinamide D-ribonucleotide + ATP + H(+) = diphosphate + NAD(+). Its pathway is cofactor biosynthesis; NAD(+) biosynthesis; NAD(+) from nicotinamide D-ribonucleotide: step 1/1. The protein is Nicotinamide-nucleotide adenylyltransferase of Methanoculleus marisnigri (strain ATCC 35101 / DSM 1498 / JR1).